We begin with the raw amino-acid sequence, 145 residues long: Basic phospholipase A2 cPm05 (145 aa).

A signal peptide spans 1-21 (MYPAHLLVLLAVCISLLGASA). Positions 22–27 (IPPLPL) are excised as a propeptide. Intrachain disulfides connect cysteine 38/cysteine 98, cysteine 54/cysteine 144, cysteine 56/cysteine 72, cysteine 71/cysteine 125, cysteine 78/cysteine 118, cysteine 87/cysteine 111, and cysteine 105/cysteine 116. 3 residues coordinate Ca(2+): tyrosine 55, glycine 57, and glycine 59. The active site involves histidine 75. Residue aspartate 76 coordinates Ca(2+). Aspartate 119 is an active-site residue.

It belongs to the phospholipase A2 family. Group I subfamily. D49 sub-subfamily. Ca(2+) is required as a cofactor. Expressed by the venom gland.

It localises to the secreted. The catalysed reaction is a 1,2-diacyl-sn-glycero-3-phosphocholine + H2O = a 1-acyl-sn-glycero-3-phosphocholine + a fatty acid + H(+). PLA2 catalyzes the calcium-dependent hydrolysis of the 2-acyl groups in 3-sn-phosphoglycerides. This Laticauda semifasciata (Black-banded sea krait) protein is Basic phospholipase A2 cPm05.